Consider the following 224-residue polypeptide: Response regulator protein GraR (224 aa).

In terms of domain architecture, Response regulatory spans 2–115 (QILLVEDDNT…VLIAKLQAIY (114 aa)). Asp51 carries the post-translational modification 4-aspartylphosphate. The ompR/PhoB-type DNA-binding region spans 126–224 (KRTLSWQDAT…KVGKGYLAHE (99 aa)).

Phosphorylated by GraS.

The protein localises to the cytoplasm. Member of the two-component regulatory system GraR/GraS involved in resistance against cationic antimicrobial peptides (CAMPs). The polypeptide is Response regulator protein GraR (graR) (Staphylococcus epidermidis (strain ATCC 35984 / DSM 28319 / BCRC 17069 / CCUG 31568 / BM 3577 / RP62A)).